Reading from the N-terminus, the 200-residue chain is ATP synthase subunit b 2 (200 aa).

The segment covering Met-1–Thr-16 has biased composition (polar residues). The tract at residues Met-1–Ala-38 is disordered. A helical membrane pass occupies residues Thr-46–Ser-66.

This sequence belongs to the ATPase B chain family. As to quaternary structure, F-type ATPases have 2 components, F(1) - the catalytic core - and F(0) - the membrane proton channel. F(1) has five subunits: alpha(3), beta(3), gamma(1), delta(1), epsilon(1). F(0) has three main subunits: a(1), b(2) and c(10-14). The alpha and beta chains form an alternating ring which encloses part of the gamma chain. F(1) is attached to F(0) by a central stalk formed by the gamma and epsilon chains, while a peripheral stalk is formed by the delta and b chains.

It localises to the cell inner membrane. F(1)F(0) ATP synthase produces ATP from ADP in the presence of a proton or sodium gradient. F-type ATPases consist of two structural domains, F(1) containing the extramembraneous catalytic core and F(0) containing the membrane proton channel, linked together by a central stalk and a peripheral stalk. During catalysis, ATP synthesis in the catalytic domain of F(1) is coupled via a rotary mechanism of the central stalk subunits to proton translocation. Functionally, component of the F(0) channel, it forms part of the peripheral stalk, linking F(1) to F(0). The b'-subunit is a diverged and duplicated form of b found in plants and photosynthetic bacteria. This Methylorubrum populi (strain ATCC BAA-705 / NCIMB 13946 / BJ001) (Methylobacterium populi) protein is ATP synthase subunit b 2 (atpF2).